The following is a 481-amino-acid chain: Guanine nucleotide exchange factor C9orf72 homolog (481 aa).

Positions 23-194 constitute a uDENN C9ORF72-type domain; it reads SPLLAATFAY…ELLASMKSHS (172 aa). The 144-residue stretch at 200-343 folds into the cDENN C9ORF72-type domain; sequence DIADTVLNDD…SELTAFWRAT (144 aa). One can recognise a dDENN C9ORF72-type domain in the interval 370–464; it reads VLHRDTLVKA…IKPGLHSFIF (95 aa). A required for the homodimerization of the C9orf72-SMCR8 complex region spans residues 461 to 481; the sequence is SFIFGRPFYTSVQERDVLMTF.

In terms of assembly, component of the C9orf72-SMCR8 complex, at least composed of C9orf72, SMCR8 and WDR41. The complex is formed of two protomers, each individually consisting of one molecule each of C9orf72, SMCR8 and WDR41. The protomers homodimerize via an interaction between C9orf72 (via C-terminus) and SMCR8 (via N-terminus). Within each protomer SMCR8 (via DENN domain) acts as a bridging protein between WDR41 (via C-terminus and N-terminus) and C9orf72 (via C-terminus). The C9orf72-SMCR8 complex associates with the ULK1/ATG1 kinase complex. Interacts with ULK1/ATG1 kinase complex members ULK1, ATG13 and RB1CC1. Interacts with SMCR8; the interaction is direct. Interacts with HNRNPA1, HNRNPA2B1 and UBQLN2. Interacts with small Rab GTPase RAB1A; the interaction mediates recruitment of RAB1A to the ULK1/ATG1 kinase complex. Also interacts with small Rab GTPase RAB7A. Interacts with cofilin. Interacts with GTP-binding proteins ARF1 and ARF6. Interacts with the DLG4/PSD-95. Interacts with CARM1 (via PH domain-like fold). Interacts with RAB39A and RAB39B (in GDP-bound forms); functions as GEF for RAB39A and RAB39B. Expressed in postnatal cerebellum and cortex (at protein level). Neuronal expression is detected in several regions of the adult brain and spinal cord. Prominent expression also observed in embryonic and early postnatal neurons including retinal ganglion cells, sensory neurons in the olfactory epithelium and in dorsal root ganglia, and spinal motor neurons. Expressed in the developing cerebral cortex, cerebellum, olfactory bulb, hippocampus and spinal cord in the embryo and in P0 cortical neurons and astrocytes. Also expressed in non-neuronal tissues such as kidney and tooth. In the spleen, highly expressed in myeloid cells compared to B cell and T cell populations where expression is much lower. In the brain, highly expressed in microglia. As to expression, expressed in the forebrain, including in the glomerular layer of the olfactory bulb (at protein level).

Its subcellular location is the nucleus. It localises to the cytoplasm. The protein resides in the P-body. The protein localises to the stress granule. It is found in the endosome. Its subcellular location is the lysosome. It localises to the cytoplasmic vesicle. The protein resides in the autophagosome. The protein localises to the autolysosome. It is found in the secreted. Its subcellular location is the cell projection. It localises to the axon. The protein resides in the growth cone. The protein localises to the perikaryon. It is found in the dendrite. Its subcellular location is the presynapse. It localises to the postsynapse. Acts as a guanine-nucleotide releasing factor (GEF) for Rab GTPases by promoting the conversion of inactive RAB-GDP to the active form RAB-GTP. Acts as a GEF for RAB39A which enables HOPS-mediated autophagosome-lysosome membrane tethering and fusion in mammalian autophagy. Component of the C9orf72-SMCR8 complex where both subunits display GEF activity and that regulates autophagy. As part of the C9orf72-SMCR8-WDR41 (CSW) complex, functions as GEF for RAB8A, and RAB39B, thereby promoting autophagosome maturation. As part of the C9orf72-SMCR8 complex, also functions as GTPase activating protein (GAP) for RAB8A and RAB11A in vitro. The C9orf72-SMCR8 complex also acts as a regulator of autophagy initiation by interacting with the ULK1/ATG1 kinase complex and modulating its protein kinase activity. Promotes initiation of autophagy by regulating the RAB1A-dependent trafficking of the ULK1/ATG1 kinase complex to the phagophore which leads to autophagosome formation. Acts as a regulator of mTORC1 signaling by promoting phosphorylation of mTORC1 substrates. Plays a role in endosomal trafficking. May be involved in regulating the maturation of phagosomes to lysosomes. Promotes the lysosomal localization and lysosome-mediated degradation of CARM1 which leads to inhibition of starvation-induced lipid metabolism. Regulates actin dynamics in motor neurons by inhibiting the GTP-binding activity of ARF6, leading to ARF6 inactivation. This reduces the activity of the LIMK1 and LIMK2 kinases which are responsible for phosphorylation and inactivation of CFL1/cofilin, leading to cofilin activation. Positively regulates axon extension and axon growth cone size in spinal motor neurons. Required for SMCR8 protein expression and localization at pre- and post-synaptic compartments in the forebrain, also regulates protein abundance of RAB3A and GRIA1/GLUR1 in post-synaptic compartments in the forebrain and hippocampus. Plays a role within the hematopoietic system in restricting inflammation and the development of autoimmunity. The chain is Guanine nucleotide exchange factor C9orf72 homolog from Mus musculus (Mouse).